We begin with the raw amino-acid sequence, 421 residues long: Gamma-glutamyl phosphate reductase (421 aa).

Belongs to the gamma-glutamyl phosphate reductase family.

Its subcellular location is the cytoplasm. The enzyme catalyses L-glutamate 5-semialdehyde + phosphate + NADP(+) = L-glutamyl 5-phosphate + NADPH + H(+). The protein operates within amino-acid biosynthesis; L-proline biosynthesis; L-glutamate 5-semialdehyde from L-glutamate: step 2/2. Its function is as follows. Catalyzes the NADPH-dependent reduction of L-glutamate 5-phosphate into L-glutamate 5-semialdehyde and phosphate. The product spontaneously undergoes cyclization to form 1-pyrroline-5-carboxylate. The sequence is that of Gamma-glutamyl phosphate reductase from Acinetobacter baumannii (strain SDF).